The chain runs to 552 residues: Probable protein kinase UbiB (552 aa).

A Protein kinase domain is found at His-121–Ala-504. ATP-binding positions include Leu-127–Val-135 and Lys-149. Asp-284 functions as the Proton acceptor in the catalytic mechanism. Transmembrane regions (helical) follow at residues Val-501–His-521 and Ile-530–Trp-550.

It belongs to the ABC1 family. UbiB subfamily.

It is found in the cell inner membrane. The protein operates within cofactor biosynthesis; ubiquinone biosynthesis [regulation]. Is probably a protein kinase regulator of UbiI activity which is involved in aerobic coenzyme Q (ubiquinone) biosynthesis. The protein is Probable protein kinase UbiB of Xylella fastidiosa (strain M12).